Here is a 284-residue protein sequence, read N- to C-terminus: Aliphatic sulfonates import ATP-binding protein SsuB (284 aa).

The region spanning 21 to 242 (LRIAHAVKRY…HRGAPAFARL (222 aa)) is the ABC transporter domain. 53-60 (GRSGCGKS) contributes to the ATP binding site.

This sequence belongs to the ABC transporter superfamily. Aliphatic sulfonates importer (TC 3.A.1.17.2) family. The complex is composed of two ATP-binding proteins (SsuB), two transmembrane proteins (SsuC) and a solute-binding protein (SsuA).

Its subcellular location is the cell inner membrane. It carries out the reaction ATP + H2O + aliphatic sulfonate-[sulfonate-binding protein]Side 1 = ADP + phosphate + aliphatic sulfonateSide 2 + [sulfonate-binding protein]Side 1.. In terms of biological role, part of the ABC transporter complex SsuABC involved in aliphatic sulfonates import. Responsible for energy coupling to the transport system. This chain is Aliphatic sulfonates import ATP-binding protein SsuB, found in Ralstonia nicotianae (strain ATCC BAA-1114 / GMI1000) (Ralstonia solanacearum).